We begin with the raw amino-acid sequence, 282 residues long: Putative hydrolase Bmul_3283/BMULJ_05242 (282 aa).

Residues E124, E126, and D155 each contribute to the Mg(2+) site.

This sequence belongs to the FAH family. The cofactor is Mg(2+).

The sequence is that of Putative hydrolase Bmul_3283/BMULJ_05242 from Burkholderia multivorans (strain ATCC 17616 / 249).